The following is a 341-amino-acid chain: MINQVYQLVAPRQFEVTYNNVDIYSDYVIVRPLYMSICAADQRYYTGSRDENVLSQKLPMSLIHEGVGEVVFDSKGVFNKGTKVVMVPNTPTEKDDVIAENYLKSSYFRSSGHDGFMQDFVLLNHDRAVPLPDDIDLSIISYTELVTVSLHAIRRFEKKSISNKNTFGIWGDGNLGYITAILLRKLYPESKIYVFGKTDYKLSHFSFVDDVFFINKIPEGLTFDHAFECVGGRGSQSAINQMIDYISPEGSIALLGVSEFPVEVNTRLVLEKGLTLIGSSRSGSKDFQDVVDLYIQYPDIVDKLALLKGQEFEIATINDLTEAFEADLSTSWGKTVLKWIM.

Zn(2+) is bound by residues cysteine 38, histidine 64, glutamate 65, and glutamate 144.

The protein belongs to the zinc-containing alcohol dehydrogenase family. Heterodimer together with TarI. Can also form a dimer of heterodimers. It depends on Zn(2+) as a cofactor.

The catalysed reaction is D-ribitol 5-phosphate + NADP(+) = D-ribulose 5-phosphate + NADPH + H(+). It participates in cell wall biogenesis; poly(ribitol phosphate) teichoic acid biosynthesis. In terms of biological role, catalyzes the NADPH dependent reduction of D-ribulose 5-phosphate to D-ribitol 5-phosphate. In Staphylococcus aureus (strain NCTC 8325 / PS 47), this protein is Ribulose-5-phosphate reductase 1.